The sequence spans 438 residues: Proline--tRNA ligase (438 aa).

Belongs to the class-II aminoacyl-tRNA synthetase family. ProS type 2 subfamily. Homodimer.

The protein resides in the cytoplasm. The catalysed reaction is tRNA(Pro) + L-proline + ATP = L-prolyl-tRNA(Pro) + AMP + diphosphate. Catalyzes the attachment of proline to tRNA(Pro) in a two-step reaction: proline is first activated by ATP to form Pro-AMP and then transferred to the acceptor end of tRNA(Pro). This chain is Proline--tRNA ligase, found in Gluconobacter oxydans (strain 621H) (Gluconobacter suboxydans).